Reading from the N-terminus, the 641-residue chain is FACT complex subunit SSRP1-A (641 aa).

Residues 459-561 (TDDDAVDPHL…DPNAPKRAMT (103 aa)) are disordered. Acidic residues predominate over residues 476–487 (GDEESDEEDEDF). Residues 512–524 (GGEKEKLSKKEAS) are compositionally biased toward basic and acidic residues. Residues 556-624 (PKRAMTPFMY…RYEKESAVYR (69 aa)) constitute a DNA-binding region (HMG box).

The protein belongs to the SSRP1 family. As to quaternary structure, component of the FACT complex, a stable heterodimer of SPT16 and SSRP1.

The protein localises to the nucleus. Its subcellular location is the chromosome. Component of the FACT complex, a general chromatin factor that acts to reorganize nucleosomes. The FACT complex is involved in multiple processes that require DNA as a template such as mRNA elongation, DNA replication and DNA repair. During transcription elongation the FACT complex acts as a histone chaperone that both destabilizes and restores nucleosomal structure. It facilitates the passage of RNA polymerase II and transcription by promoting the dissociation of one histone H2A-H2B dimer from the nucleosome, then subsequently promotes the reestablishment of the nucleosome following the passage of RNA polymerase II. Binds specifically to double-stranded DNA. In Oryza sativa subsp. japonica (Rice), this protein is FACT complex subunit SSRP1-A (SSRP1-A).